Consider the following 439-residue polypeptide: Ribosomal protein uS12 methylthiotransferase RimO (439 aa).

An MTTase N-terminal domain is found at 7-119 (KQLCLISLGC…IDIMIAKKQN (113 aa)). Residues Cys16, Cys50, Cys82, Cys151, Cys155, and Cys158 each contribute to the [4Fe-4S] cluster site. The 232-residue stretch at 137–368 (TGSSVHAYVK…ALKHQNHSFK (232 aa)) folds into the Radical SAM core domain.

This sequence belongs to the methylthiotransferase family. RimO subfamily. [4Fe-4S] cluster is required as a cofactor.

It localises to the cytoplasm. It catalyses the reaction L-aspartate(89)-[ribosomal protein uS12]-hydrogen + (sulfur carrier)-SH + AH2 + 2 S-adenosyl-L-methionine = 3-methylsulfanyl-L-aspartate(89)-[ribosomal protein uS12]-hydrogen + (sulfur carrier)-H + 5'-deoxyadenosine + L-methionine + A + S-adenosyl-L-homocysteine + 2 H(+). Functionally, catalyzes the methylthiolation of an aspartic acid residue of ribosomal protein uS12. This Helicobacter pylori (strain P12) protein is Ribosomal protein uS12 methylthiotransferase RimO.